Here is a 234-residue protein sequence, read N- to C-terminus: Leucyl/phenylalanyl-tRNA--protein transferase (234 aa).

This sequence belongs to the L/F-transferase family.

Its subcellular location is the cytoplasm. The enzyme catalyses N-terminal L-lysyl-[protein] + L-leucyl-tRNA(Leu) = N-terminal L-leucyl-L-lysyl-[protein] + tRNA(Leu) + H(+). It catalyses the reaction N-terminal L-arginyl-[protein] + L-leucyl-tRNA(Leu) = N-terminal L-leucyl-L-arginyl-[protein] + tRNA(Leu) + H(+). It carries out the reaction L-phenylalanyl-tRNA(Phe) + an N-terminal L-alpha-aminoacyl-[protein] = an N-terminal L-phenylalanyl-L-alpha-aminoacyl-[protein] + tRNA(Phe). Functionally, functions in the N-end rule pathway of protein degradation where it conjugates Leu, Phe and, less efficiently, Met from aminoacyl-tRNAs to the N-termini of proteins containing an N-terminal arginine or lysine. The chain is Leucyl/phenylalanyl-tRNA--protein transferase from Shigella boydii serotype 18 (strain CDC 3083-94 / BS512).